A 562-amino-acid chain; its full sequence is Adenylate kinase isoenzyme 5 (562 aa).

Adenylate kinase regions lie at residues 133–316 (KIIL…MAVD) and 377–559 (KIIF…TAID). 142 to 147 (GSGKGT) provides a ligand contact to ATP. The NMP 1 stretch occupies residues 162–193 (SVGELLRKKIHSTSSNRKWSLIAKIITTGELA). Residues R168, 191 to 193 (ELA), 219 to 222 (GFPR), and Q226 contribute to the AMP site. Residues 256–266 (KRAEQQGRPDD) are LID 1. R257 lines the ATP pocket. 2 residues coordinate AMP: R263 and R274. An ATP-binding site is contributed by 386–391 (GSGKGT). The tract at residues 406 to 435 (STDELLQNELSSESGRSKLIRDIMERGELV) is NMP 2. AMP is bound by residues T407, 433 to 435 (ELV), 462 to 465 (GYPR), and Q469. The segment at 499 to 509 (QRSRNSPQADD) is LID 2. R500 provides a ligand contact to ATP. Position 517 (R517) interacts with AMP. An ATP-binding site is contributed by G545.

It belongs to the adenylate kinase family. Monomer.

It is found in the cytoplasm. The catalysed reaction is AMP + ATP = 2 ADP. It carries out the reaction a 2'-deoxyribonucleoside 5'-diphosphate + ATP = a 2'-deoxyribonucleoside 5'-triphosphate + ADP. It catalyses the reaction a ribonucleoside 5'-diphosphate + ATP = a ribonucleoside 5'-triphosphate + ADP. Its function is as follows. Nucleoside monophosphate (NMP) kinase that catalyzes the reversible transfer of the terminal phosphate group between nucleoside triphosphates and monophosphates. Active on AMP and dAMP with ATP as a donor. When GTP is used as phosphate donor, the enzyme phosphorylates AMP, CMP, and to a small extent dCMP. Also displays broad nucleoside diphosphate kinase activity. This is Adenylate kinase isoenzyme 5 (Ak5) from Bos taurus (Bovine).